The following is a 212-amino-acid chain: Probable U3 small nucleolar RNA-associated protein 11 (212 aa).

Belongs to the UTP11 family. Component of the ribosomal small subunit (SSU) processome.

The protein localises to the nucleus. The protein resides in the nucleolus. Its function is as follows. Involved in nucleolar processing of pre-18S ribosomal RNA. This chain is Probable U3 small nucleolar RNA-associated protein 11, found in Plasmodium falciparum (isolate 3D7).